Here is a 281-residue protein sequence, read N- to C-terminus: ATP phosphoribosyltransferase (281 aa).

Belongs to the ATP phosphoribosyltransferase family. Long subfamily. The cofactor is Mg(2+).

The protein resides in the cytoplasm. The enzyme catalyses 1-(5-phospho-beta-D-ribosyl)-ATP + diphosphate = 5-phospho-alpha-D-ribose 1-diphosphate + ATP. Its pathway is amino-acid biosynthesis; L-histidine biosynthesis; L-histidine from 5-phospho-alpha-D-ribose 1-diphosphate: step 1/9. Feedback inhibited by histidine. In terms of biological role, catalyzes the condensation of ATP and 5-phosphoribose 1-diphosphate to form N'-(5'-phosphoribosyl)-ATP (PR-ATP). Has a crucial role in the pathway because the rate of histidine biosynthesis seems to be controlled primarily by regulation of HisG enzymatic activity. In Corynebacterium glutamicum (strain R), this protein is ATP phosphoribosyltransferase.